The sequence spans 69 residues: Bacteriocin microcin B17 (69 aa).

The propeptide occupies methionine 1–glycine 26. Residues glycine 39 to serine 40 constitute a cross-link (oxazole-4-carboxylic acid (Gly-Ser)). Residues serine 40–cysteine 41 constitute a cross-link (thiazole-4-carboxylic acid (Ser-Cys)). 3 cross-links (thiazole-4-carboxylic acid (Gly-Cys)) span residues glycine 47–cysteine 48, glycine 50–cysteine 51, and glycine 54–cysteine 55. The oxazole-4-carboxylic acid (Cys-Ser) cross-link spans cysteine 55 to serine 56. 2 consecutive cross-links (oxazole-4-carboxylic acid (Gly-Ser)) follow at residues glycine 61–serine 62 and glycine 64–serine 65.

In terms of processing, the processed N-terminus does not resemble a typical secretion signal sequence. Maturation of thiazole and oxazole containing antibiotics involves the enzymatic condensation of a Cys, Ser or Thr with the alpha-carbonyl of the preceding amino acid to form a thioether or ether bond, then dehydration to form a double bond with the alpha-amino nitrogen. Thiazoline or oxazoline rings are dehydrogenated to form thiazole or oxazole rings.

Its function is as follows. This glycine-rich peptide antibiotic inhibits DNA replication in many enteric bacteria, that leads to induction of the SOS repair system, massive DNA degradation and cell death. B17 inhibits type II topoisomerase by trapping an enzyme - DNA cleavable complex. This Escherichia coli protein is Bacteriocin microcin B17 (mcbA).